The following is a 178-amino-acid chain: uncharacterized protein (178 aa).

This is an uncharacterized protein from Escherichia coli (strain K12).